A 239-amino-acid chain; its full sequence is tRNA1(Val) (adenine(37)-N6)-methyltransferase (239 aa).

Belongs to the methyltransferase superfamily. tRNA (adenine-N(6)-)-methyltransferase family.

It localises to the cytoplasm. The catalysed reaction is adenosine(37) in tRNA1(Val) + S-adenosyl-L-methionine = N(6)-methyladenosine(37) in tRNA1(Val) + S-adenosyl-L-homocysteine + H(+). Its function is as follows. Specifically methylates the adenine in position 37 of tRNA(1)(Val) (anticodon cmo5UAC). This is tRNA1(Val) (adenine(37)-N6)-methyltransferase from Vibrio parahaemolyticus serotype O3:K6 (strain RIMD 2210633).